Consider the following 862-residue polypeptide: DNA topoisomerase 3-beta-1 (862 aa).

The 151-residue stretch at 3–153 folds into the Toprim domain; that stretch reads TVLMVAEKPS…EKTVFRARFS (151 aa). Positions 171 to 593 constitute a Topo IA-type catalytic domain; sequence DHNEALSVDA…HTLDIFKRKF (423 aa). The active-site O-(5'-phospho-DNA)-tyrosine intermediate is tyrosine 336. Residues 820-855 form a disordered region; it reads HPMHRGGPGRRQGRGRGRGRRPPGKPNPRRPKDKMS. Residues 821–851 show a composition bias toward basic residues; sequence PMHRGGPGRRQGRGRGRGRRPPGKPNPRRPK.

The protein belongs to the type IA topoisomerase family. In terms of tissue distribution, highly expressed in testis.

It carries out the reaction ATP-independent breakage of single-stranded DNA, followed by passage and rejoining.. In terms of biological role, releases the supercoiling and torsional tension of DNA introduced during the DNA replication and transcription by transiently cleaving and rejoining one strand of the DNA duplex. Introduces a single-strand break via transesterification at a target site in duplex DNA. The scissile phosphodiester is attacked by the catalytic tyrosine of the enzyme, resulting in the formation of a DNA-(5'-phosphotyrosyl)-enzyme intermediate and the expulsion of a 3'-OH DNA strand. The free DNA strand than undergoes passage around the unbroken strand thus removing DNA supercoils. Finally, in the religation step, the DNA 3'-OH attacks the covalent intermediate to expel the active-site tyrosine and restore the DNA phosphodiester backbone. Possesses negatively supercoiled DNA relaxing activity. In Mus musculus (Mouse), this protein is DNA topoisomerase 3-beta-1 (Top3b).